The following is a 142-amino-acid chain: Hemoglobin subunit alpha (142 aa).

The region spanning 2–142 is the Globin domain; that stretch reads VLSPADKSNV…VSTVLTSKYR (141 aa). Position 4 is a phosphoserine (S4). An N6-succinyllysine mark is found at K8 and K12. K17 carries the N6-acetyllysine; alternate modification. N6-succinyllysine; alternate is present on K17. A Phosphotyrosine modification is found at Y25. A Phosphoserine modification is found at S36. K41 bears the N6-succinyllysine mark. A Phosphoserine modification is found at S50. Position 59 (H59) interacts with O2. Residue H88 participates in heme b binding. Residue S103 is modified to Phosphoserine. A Phosphothreonine modification is found at T109. A phosphoserine mark is found at S125 and S132. A phosphothreonine mark is found at T135 and T138. Residue S139 is modified to Phosphoserine.

Belongs to the globin family. In terms of assembly, heterotetramer of two alpha chains and two beta chains. As to expression, red blood cells.

Functionally, involved in oxygen transport from the lung to the various peripheral tissues. Its function is as follows. Hemopressin acts as an antagonist peptide of the cannabinoid receptor CNR1. Hemopressin-binding efficiently blocks cannabinoid receptor CNR1 and subsequent signaling. This is Hemoglobin subunit alpha (HBA) from Chlorocebus aethiops (Green monkey).